We begin with the raw amino-acid sequence, 100 residues long: Aspartyl/glutamyl-tRNA(Asn/Gln) amidotransferase subunit C (100 aa).

This sequence belongs to the GatC family. As to quaternary structure, heterotrimer of A, B and C subunits.

It carries out the reaction L-glutamyl-tRNA(Gln) + L-glutamine + ATP + H2O = L-glutaminyl-tRNA(Gln) + L-glutamate + ADP + phosphate + H(+). The catalysed reaction is L-aspartyl-tRNA(Asn) + L-glutamine + ATP + H2O = L-asparaginyl-tRNA(Asn) + L-glutamate + ADP + phosphate + 2 H(+). Allows the formation of correctly charged Asn-tRNA(Asn) or Gln-tRNA(Gln) through the transamidation of misacylated Asp-tRNA(Asn) or Glu-tRNA(Gln) in organisms which lack either or both of asparaginyl-tRNA or glutaminyl-tRNA synthetases. The reaction takes place in the presence of glutamine and ATP through an activated phospho-Asp-tRNA(Asn) or phospho-Glu-tRNA(Gln). The protein is Aspartyl/glutamyl-tRNA(Asn/Gln) amidotransferase subunit C of Janthinobacterium sp. (strain Marseille) (Minibacterium massiliensis).